Reading from the N-terminus, the 207-residue chain is Cytochrome c oxidase subunit 3 (207 aa).

Transmembrane regions (helical) follow at residues 30-50 (FWLF…TFLA), 67-87 (VTLV…SVYA), 101-121 (LWLG…IYEF), 144-164 (LVGT…TLMI), and 186-206 (WHFI…MGMV).

It belongs to the cytochrome c oxidase subunit 3 family.

It is found in the cell membrane. It catalyses the reaction 4 Fe(II)-[cytochrome c] + O2 + 8 H(+)(in) = 4 Fe(III)-[cytochrome c] + 2 H2O + 4 H(+)(out). The protein is Cytochrome c oxidase subunit 3 (ctaE) of Bacillus subtilis (strain 168).